The chain runs to 570 residues: Glutamate--tRNA ligase (570 aa).

The 'HIGH' region signature appears at 107-117 (PNPDFVLHLGS).

The protein belongs to the class-I aminoacyl-tRNA synthetase family. Glutamate--tRNA ligase type 2 subfamily.

The protein localises to the cytoplasm. The catalysed reaction is tRNA(Glu) + L-glutamate + ATP = L-glutamyl-tRNA(Glu) + AMP + diphosphate. Catalyzes the attachment of glutamate to tRNA(Glu) in a two-step reaction: glutamate is first activated by ATP to form Glu-AMP and then transferred to the acceptor end of tRNA(Glu). This Pyrobaculum islandicum (strain DSM 4184 / JCM 9189 / GEO3) protein is Glutamate--tRNA ligase.